Consider the following 118-residue polypeptide: Non-specific lipid-transfer protein (118 aa).

An N-terminal signal peptide occupies residues 1 to 25 (MDCIRILWSVAVGLLLVSWRPTMFA). Intrachain disulfides connect Cys-30–Cys-76, Cys-40–Cys-53, Cys-54–Cys-98, and Cys-74–Cys-113.

It belongs to the plant LTP family.

Its function is as follows. Plant non-specific lipid-transfer proteins transfer phospholipids as well as galactolipids across membranes. May play a role in wax or cutin deposition in the cell walls of expanding epidermal cells and certain secretory tissues. In Ambrosia artemisiifolia (Common ragweed), this protein is Non-specific lipid-transfer protein.